A 951-amino-acid polypeptide reads, in one-letter code: Valine--tRNA ligase (951 aa).

The 'HIGH' region motif lies at 40 to 50 (PNVTGSLHMGH). Positions 551-555 (KMSKS) match the 'KMSKS' region motif. Residue Lys-554 participates in ATP binding. Positions 879 to 950 (MAGLIDVEAE…LLEQKAKIES (72 aa)) form a coiled coil.

Belongs to the class-I aminoacyl-tRNA synthetase family. ValS type 1 subfamily. As to quaternary structure, monomer.

It is found in the cytoplasm. The enzyme catalyses tRNA(Val) + L-valine + ATP = L-valyl-tRNA(Val) + AMP + diphosphate. Catalyzes the attachment of valine to tRNA(Val). As ValRS can inadvertently accommodate and process structurally similar amino acids such as threonine, to avoid such errors, it has a 'posttransfer' editing activity that hydrolyzes mischarged Thr-tRNA(Val) in a tRNA-dependent manner. In Pseudoalteromonas translucida (strain TAC 125), this protein is Valine--tRNA ligase.